We begin with the raw amino-acid sequence, 1425 residues long: Rho GTPase-activating protein 31 (1425 aa).

The region spanning 21 to 216 (CDLTEYLESS…FILNHADQIF (196 aa)) is the Rho-GAP domain. The disordered stretch occupies residues 258–277 (LATNHPARKERRENSLPEIV). At S272 the chain carries Phosphoserine. The residue at position 283 (T283) is a Phosphothreonine. Phosphoserine occurs at positions 343, 346, 384, and 464. Positions 511–522 (EEFSFQGSESGG) are enriched in low complexity. Disordered regions lie at residues 511–621 (EEFS…GAGT), 652–700 (SEEE…TRDA), and 756–951 (IEIG…GNSH). Composition is skewed to basic and acidic residues over residues 543 to 556 (AATE…EVPG) and 587 to 600 (KEAE…KVME). Over residues 603-615 (QGASQPKPSTPQE) the composition is skewed to polar residues. T666 carries the post-translational modification Phosphothreonine. Pro residues predominate over residues 671–681 (ESSPAPFPFPE). Residues S685, S690, and S765 each carry the phosphoserine modification. Positions 767–777 (PLTPAPPPPTP) are enriched in pro residues. Phosphothreonine is present on T769. At T776 the chain carries Phosphothreonine; by GSK3. The span at 789-804 (EGPDREDAARDSRTDV) shows a compositional bias: basic and acidic residues. Residues 936-951 (LRQSHSLDSKTTGNSH) are compositionally biased toward polar residues. 4 positions are modified to phosphoserine: S961, S1092, S1093, and S1163. Residues 1031-1095 (KEQEPQLELS…KGKHRPSSLN (65 aa)) are disordered. Composition is skewed to polar residues over residues 1196 to 1206 (QIPQPLPSQST), 1250 to 1260 (QETGASASRRQ), and 1299 to 1308 (TEPSGDNLLS). Disordered regions lie at residues 1196–1260 (QIPQ…SRRQ) and 1291–1327 (QCRK…SRPG).

As to quaternary structure, interacts with ITSN1, which inhibits GAP activity. Interacts with PARVA. Interacts with GTP-loaded RHOU. Phosphorylated on Thr-776 by GSK3; which reduces GAP activity. As to expression, expressed at highest levels in heart and lung.

The protein localises to the cell projection. It is found in the lamellipodium. It localises to the cell junction. The protein resides in the focal adhesion. Functionally, functions as a GTPase-activating protein (GAP) for RAC1 and CDC42. Required for cell spreading, polarized lamellipodia formation and cell migration. In Mus musculus (Mouse), this protein is Rho GTPase-activating protein 31 (Arhgap31).